We begin with the raw amino-acid sequence, 483 residues long: Aspartyl/glutamyl-tRNA(Asn/Gln) amidotransferase subunit B (483 aa).

This sequence belongs to the GatB/GatE family. GatB subfamily. Heterotrimer of A, B and C subunits.

The enzyme catalyses L-glutamyl-tRNA(Gln) + L-glutamine + ATP + H2O = L-glutaminyl-tRNA(Gln) + L-glutamate + ADP + phosphate + H(+). It carries out the reaction L-aspartyl-tRNA(Asn) + L-glutamine + ATP + H2O = L-asparaginyl-tRNA(Asn) + L-glutamate + ADP + phosphate + 2 H(+). Functionally, allows the formation of correctly charged Asn-tRNA(Asn) or Gln-tRNA(Gln) through the transamidation of misacylated Asp-tRNA(Asn) or Glu-tRNA(Gln) in organisms which lack either or both of asparaginyl-tRNA or glutaminyl-tRNA synthetases. The reaction takes place in the presence of glutamine and ATP through an activated phospho-Asp-tRNA(Asn) or phospho-Glu-tRNA(Gln). The chain is Aspartyl/glutamyl-tRNA(Asn/Gln) amidotransferase subunit B from Anaeromyxobacter sp. (strain Fw109-5).